A 310-amino-acid chain; its full sequence is UDP-N-acetylenolpyruvoylglucosamine reductase (310 aa).

The 169-residue stretch at 35 to 203 (RAGGAAEALV…TRVRFALRKG (169 aa)) folds into the FAD-binding PCMH-type domain. Arg-183 is an active-site residue. Ser-232 functions as the Proton donor in the catalytic mechanism. Residue Glu-302 is part of the active site.

The protein belongs to the MurB family. It depends on FAD as a cofactor.

It is found in the cytoplasm. The catalysed reaction is UDP-N-acetyl-alpha-D-muramate + NADP(+) = UDP-N-acetyl-3-O-(1-carboxyvinyl)-alpha-D-glucosamine + NADPH + H(+). The protein operates within cell wall biogenesis; peptidoglycan biosynthesis. In terms of biological role, cell wall formation. In Myxococcus xanthus (strain DK1622), this protein is UDP-N-acetylenolpyruvoylglucosamine reductase.